A 1340-amino-acid polypeptide reads, in one-letter code: Serine/threonine-protein phosphatase 7 long form homolog (1340 aa).

Positions 660 and 662 each coordinate Mn(2+). Histidine 722 serves as the catalytic Proton donor. A Mn(2+)-binding site is contributed by histidine 773. Disordered stretches follow at residues 788–814, 1012–1093, 1196–1218, and 1266–1340; these read QERN…DRSE, KSMD…SRTR, TDGA…SEDI, and FTNL…DMDS. Positions 790–799 are enriched in basic residues; that stretch reads RNRKRKRTQK. The segment covering 1018–1027 has biased composition (acidic residues); that stretch reads EQMEVDEKDD. Over residues 1049–1080 the composition is skewed to basic and acidic residues; the sequence is GDRDMVDFSDKTENGSKEADHSETAEISKDLS. Positions 1203–1213 are enriched in polar residues; it reads EPSTSKLNYSE. Composition is skewed to basic and acidic residues over residues 1266 to 1289 and 1318 to 1328; these read FTNL…ERVI and DSVDSKNKGSL.

The protein belongs to the PPP phosphatase family. PP-7 subfamily. It depends on Mn(2+) as a cofactor. In terms of tissue distribution, expressed in root tips, the shoot apical meristem (SAM), leaf vasculature, hydathodes and mature flowers.

It is found in the nucleus. The catalysed reaction is O-phospho-L-seryl-[protein] + H2O = L-seryl-[protein] + phosphate. It catalyses the reaction O-phospho-L-threonyl-[protein] + H2O = L-threonyl-[protein] + phosphate. In terms of biological role, maybe required to maintain cell division activity in meristematic cells. The chain is Serine/threonine-protein phosphatase 7 long form homolog from Arabidopsis thaliana (Mouse-ear cress).